The following is a 74-amino-acid chain: Exodeoxyribonuclease 7 small subunit (74 aa).

The protein belongs to the XseB family. Heterooligomer composed of large and small subunits.

It is found in the cytoplasm. The catalysed reaction is Exonucleolytic cleavage in either 5'- to 3'- or 3'- to 5'-direction to yield nucleoside 5'-phosphates.. Its function is as follows. Bidirectionally degrades single-stranded DNA into large acid-insoluble oligonucleotides, which are then degraded further into small acid-soluble oligonucleotides. This chain is Exodeoxyribonuclease 7 small subunit, found in Neisseria gonorrhoeae (strain ATCC 700825 / FA 1090).